The chain runs to 70 residues: DNA-directed RNA polymerase subunit omega (70 aa).

The protein belongs to the RNA polymerase subunit omega family. As to quaternary structure, the RNAP catalytic core consists of 2 alpha, 1 beta, 1 beta' and 1 omega subunit. When a sigma factor is associated with the core the holoenzyme is formed, which can initiate transcription.

It catalyses the reaction RNA(n) + a ribonucleoside 5'-triphosphate = RNA(n+1) + diphosphate. In terms of biological role, promotes RNA polymerase assembly. Latches the N- and C-terminal regions of the beta' subunit thereby facilitating its interaction with the beta and alpha subunits. The protein is DNA-directed RNA polymerase subunit omega of Marinobacter nauticus (strain ATCC 700491 / DSM 11845 / VT8) (Marinobacter aquaeolei).